A 347-amino-acid polypeptide reads, in one-letter code: Ribosomal RNA large subunit methyltransferase M (347 aa).

Residues serine 184, 217–220 (APGG), aspartate 236, aspartate 256, and aspartate 272 contribute to the S-adenosyl-L-methionine site. The Proton acceptor role is filled by lysine 301.

It belongs to the class I-like SAM-binding methyltransferase superfamily. RNA methyltransferase RlmE family. RlmM subfamily. In terms of assembly, monomer.

The protein localises to the cytoplasm. The catalysed reaction is cytidine(2498) in 23S rRNA + S-adenosyl-L-methionine = 2'-O-methylcytidine(2498) in 23S rRNA + S-adenosyl-L-homocysteine + H(+). Functionally, catalyzes the 2'-O-methylation at nucleotide C2498 in 23S rRNA. This chain is Ribosomal RNA large subunit methyltransferase M, found in Xanthomonas oryzae pv. oryzae (strain KACC10331 / KXO85).